The primary structure comprises 116 residues: Large ribosomal subunit protein bL20 (116 aa).

It belongs to the bacterial ribosomal protein bL20 family.

Its function is as follows. Binds directly to 23S ribosomal RNA and is necessary for the in vitro assembly process of the 50S ribosomal subunit. It is not involved in the protein synthesizing functions of that subunit. This Acaryochloris marina (strain MBIC 11017) protein is Large ribosomal subunit protein bL20.